We begin with the raw amino-acid sequence, 66 residues long: Alpha-bisabolene synthase (66 aa).

The protein belongs to the terpene synthase family. Tpsd subfamily. Requires Mn(2+) as cofactor. It depends on K(+) as a cofactor.

The protein localises to the cytoplasm. The catalysed reaction is (2E,6E)-farnesyl diphosphate = (E,R)-alpha-bisabolene + diphosphate. It participates in terpene metabolism; oleoresin biosynthesis. Functionally, involved in defensive oleoresin formation in conifers in response to insect attack or other injury. Involved in sesquiterpene (C15) olefins biosynthesis. In Pseudotsuga menziesii (Douglas-fir), this protein is Alpha-bisabolene synthase.